An 88-amino-acid chain; its full sequence is UPF0223 protein RBAM_014500 (88 aa).

Belongs to the UPF0223 family.

This is UPF0223 protein RBAM_014500 from Bacillus velezensis (strain DSM 23117 / BGSC 10A6 / LMG 26770 / FZB42) (Bacillus amyloliquefaciens subsp. plantarum).